The primary structure comprises 620 residues: Probable potassium transport system protein Kup (620 aa).

12 helical membrane passes run 11–31 (LAFL…LYAF), 51–71 (ILSL…LLLV), 100–120 (IAML…VITP), 138–158 (LAPY…AVQA), 167–187 (FFAP…AHAI), 202–222 (AVHF…LVVL), 246–266 (WFAL…AYLL), 288–308 (LILL…SGIF), 334–354 (GQIY…FVML), 364–384 (AAYG…LVLV), 396–416 (VVTI…STST), and 418–438 (LMEG…VMYI).

The protein belongs to the HAK/KUP transporter (TC 2.A.72) family.

Its subcellular location is the cell inner membrane. The enzyme catalyses K(+)(in) + H(+)(in) = K(+)(out) + H(+)(out). Transport of potassium into the cell. Likely operates as a K(+):H(+) symporter. The protein is Probable potassium transport system protein Kup of Vibrio cholerae serotype O1 (strain ATCC 39541 / Classical Ogawa 395 / O395).